We begin with the raw amino-acid sequence, 714 residues long: Polyribonucleotide nucleotidyltransferase (714 aa).

2 residues coordinate Mg(2+): Asp488 and Asp494. In terms of domain architecture, KH spans 555–614 (PRIEVMNIPVDKIREVIGSGGKVIREIVEKTGAKINIDDDGTVKIASASGKEIEAARKWI). In terms of domain architecture, S1 motif spans 624–692 (GQVYEGTVVK…ERGKVRLSMK (69 aa)).

The protein belongs to the polyribonucleotide nucleotidyltransferase family. It depends on Mg(2+) as a cofactor.

The protein localises to the cytoplasm. It catalyses the reaction RNA(n+1) + phosphate = RNA(n) + a ribonucleoside 5'-diphosphate. In terms of biological role, involved in mRNA degradation. Catalyzes the phosphorolysis of single-stranded polyribonucleotides processively in the 3'- to 5'-direction. This Sinorhizobium medicae (strain WSM419) (Ensifer medicae) protein is Polyribonucleotide nucleotidyltransferase.